Reading from the N-terminus, the 508-residue chain is Hydroxymethylglutaryl-CoA synthase, mitochondrial (508 aa).

The transit peptide at 1–37 (MQRLLTPVKRILQLTRAVQETSLTPARLLPVAHQRFS) directs the protein to the mitochondrion. The residue at position 52 (K52) is an N6-succinyllysine. 2 residues coordinate (3S)-3-hydroxy-3-methylglutaryl-CoA: E80 and A81. K83 is subject to N6-acetyllysine; alternate. The residue at position 83 (K83) is an N6-succinyllysine; alternate. E132 serves as the catalytic Proton donor/acceptor. (3S)-3-hydroxy-3-methylglutaryl-CoA contacts are provided by C166, N204, and T208. The active-site Acyl-thioester intermediate is the C166. K221 bears the N6-succinyllysine mark. An N6-acetyllysine modification is found at K243. Residue K256 is modified to N6-acetyllysine; alternate. K256 is modified (N6-succinyllysine; alternate). Positions 258 and 301 each coordinate (3S)-3-hydroxy-3-methylglutaryl-CoA. H301 acts as the Proton donor/acceptor in catalysis. K306 bears the N6-acetyllysine mark. K310 is a (3S)-3-hydroxy-3-methylglutaryl-CoA binding site. K310 is modified (N6-acetyllysine; alternate). K310 is modified (N6-succinyllysine; alternate). K333 bears the N6-succinyllysine mark. Residues K342, K350, K354, and K358 each carry the N6-acetyllysine; alternate modification. Residues K342, K350, K354, and K358 each carry the N6-succinyllysine; alternate modification. (3S)-3-hydroxy-3-methylglutaryl-CoA-binding residues include N380 and S414. The residue at position 433 (S433) is a Phosphoserine. K437 carries the post-translational modification N6-acetyllysine. S440 is subject to Phosphoserine. K447 is subject to N6-acetyllysine; alternate. K447 is subject to N6-succinyllysine; alternate. The residue at position 456 (S456) is a Phosphoserine. K473 bears the N6-acetyllysine; alternate mark. Position 473 is an N6-succinyllysine; alternate (K473). Residue S477 is modified to Phosphoserine.

Belongs to the thiolase-like superfamily. HMG-CoA synthase family. Homodimer. In terms of processing, succinylated. Desuccinylated by SIRT5. Succinylation, at least at Lys-83 and Lys-310, inhibits the enzymatic activity. As to expression, expression in liver is 200-fold higher than in any other tissue. Low expression in colon, kidney, testis, and pancreas. Very low expression in heart and skeletal muscle. Not detected in brain. Highest expression detected in heart and skeletal muscle.

The protein localises to the mitochondrion. The catalysed reaction is acetoacetyl-CoA + acetyl-CoA + H2O = (3S)-3-hydroxy-3-methylglutaryl-CoA + CoA + H(+). It participates in metabolic intermediate biosynthesis; (R)-mevalonate biosynthesis; (R)-mevalonate from acetyl-CoA: step 2/3. Its function is as follows. Catalyzes the first irreversible step in ketogenesis, condensing acetyl-CoA to acetoacetyl-CoA to form HMG-CoA, which is converted by HMG-CoA reductase (HMGCR) into mevalonate. The protein is Hydroxymethylglutaryl-CoA synthase, mitochondrial (HMGCS2) of Homo sapiens (Human).